The chain runs to 441 residues: Ribulose bisphosphate carboxylase large chain (441 aa).

Lys-5 bears the N6,N6,N6-trimethyllysine mark. Thr-164 lines the substrate pocket. Lys-166 acts as the Proton acceptor in catalysis. Lys-168 lines the substrate pocket. 3 residues coordinate Mg(2+): Lys-192, Asp-194, and Glu-195. Position 192 is an N6-carboxylysine (Lys-192). The active-site Proton acceptor is His-285. 3 residues coordinate substrate: Arg-286, His-318, and Ser-370.

It belongs to the RuBisCO large chain family. Type I subfamily. In terms of assembly, heterohexadecamer of 8 large chains and 8 small chains; disulfide-linked. The disulfide link is formed within the large subunit homodimers. Mg(2+) is required as a cofactor. Post-translationally, the disulfide bond which can form in the large chain dimeric partners within the hexadecamer appears to be associated with oxidative stress and protein turnover.

The protein resides in the plastid. The protein localises to the chloroplast. The catalysed reaction is 2 (2R)-3-phosphoglycerate + 2 H(+) = D-ribulose 1,5-bisphosphate + CO2 + H2O. It carries out the reaction D-ribulose 1,5-bisphosphate + O2 = 2-phosphoglycolate + (2R)-3-phosphoglycerate + 2 H(+). Its function is as follows. RuBisCO catalyzes two reactions: the carboxylation of D-ribulose 1,5-bisphosphate, the primary event in carbon dioxide fixation, as well as the oxidative fragmentation of the pentose substrate in the photorespiration process. Both reactions occur simultaneously and in competition at the same active site. The polypeptide is Ribulose bisphosphate carboxylase large chain (Hemionitis engywookii (Fendler's false cloak fern)).